A 452-amino-acid polypeptide reads, in one-letter code: Lamina-associated polypeptide 2, isoform beta (452 aa).

Residues 1-409 (MPEFLEDPSV…KSEKTKKGRS (409 aa)) are nucleoplasmic. The region spanning 5 to 48 (LEDPSVLTKDKLKSELVANNVTLPAGEQRKDVYVQLYLQHLTAR) is the LEM-like domain. Disordered stretches follow at residues 48 to 113 (RNRP…DVTE) and 149 to 264 (REQG…VEPS). Residues 49 to 107 (NRPPLAAGANSKGPPDFSSDEEREPTPVLGSGASVGRGRGAVGRKATKKTDKPRPEDKD) are linker. Phosphoserine is present on residues Ser66 and Ser67. A Phosphothreonine modification is found at Thr74. Ser82 is subject to Phosphoserine. Omega-N-methylarginine is present on residues Arg85 and Arg87. A compositionally biased stretch (basic and acidic residues) spans 96-105 (KKTDKPRPED). The region spanning 108-152 (DLDVTELSNEELLEQLVRYGVNPGPIVGTTRKLYEKKLLKLREQG) is the LEM domain. The NAKAP95-binding N stretch occupies residues 137–242 (TRKLYEKKLL…TSGSSKGGPL (106 aa)). A compositionally biased stretch (polar residues) spans 154 to 177 (ESRSSTPLPTVSSSAENTRQNGSN). Phosphoserine is present on residues Ser155 and Ser158. Thr159 carries the post-translational modification Phosphothreonine. Phosphoserine occurs at positions 165, 167, 176, 179, and 183. The span at 178 to 202 (DSDRYSDNDEDSKIELKLEKREPLK) shows a compositional bias: basic and acidic residues. At Lys206 the chain carries N6-acetyllysine. Positions 298–370 (TGNFKHASSI…SCRRPIKGAA (73 aa)) are binds lamins B. Residues 299 to 373 (GNFKHASSIL…RPIKGAAGRP (75 aa)) are NAKAP95-binding C. Phosphoserine is present on residues Ser305, Ser306, and Ser361. Residue Lys388 is modified to N6-acetyllysine. A helical; Signal-anchor for type II membrane protein membrane pass occupies residues 410-430 (VPMWIKMLLFALVAGFLFLVY). At 431-452 (QAMETNQGNPFTNFLQDTKISN) the chain is on the lumenal side.

Belongs to the LEM family. As to quaternary structure, interacts with LMNB1, LMNB2, BANF1, AKAP8L, GMCL and chromosomes. Mitosis-specific phosphorylation specifically abolishes its binding to lamin B and chromosomes.

It is found in the nucleus inner membrane. The protein resides in the chromosome. Its function is as follows. Binds directly to lamin B1 and chromosomes in a mitotic phosphorylation-regulated manner. May play an important role in nuclear envelope reassembly at the end of mitosis and/or anchoring of the nuclear lamina and interphase chromosomes to the nuclear envelope. The sequence is that of Lamina-associated polypeptide 2, isoform beta (Tmpo) from Rattus norvegicus (Rat).